We begin with the raw amino-acid sequence, 239 residues long: tRNA (guanine-N(1)-)-methyltransferase (239 aa).

S-adenosyl-L-methionine-binding positions include Gly-108 and Leu-127–Leu-132.

The protein belongs to the RNA methyltransferase TrmD family. Homodimer.

The protein resides in the cytoplasm. The enzyme catalyses guanosine(37) in tRNA + S-adenosyl-L-methionine = N(1)-methylguanosine(37) in tRNA + S-adenosyl-L-homocysteine + H(+). In terms of biological role, specifically methylates guanosine-37 in various tRNAs. In Streptococcus pneumoniae (strain P1031), this protein is tRNA (guanine-N(1)-)-methyltransferase.